Consider the following 176-residue polypeptide: Transmembrane protein 238 (176 aa).

The segment at 1–21 (MAAASPVCGSQASAVGASSPP) is disordered. Residues 1-36 (MAAASPVCGSQASAVGASSPPAPAPAPAAGLGRCRM) are Cytoplasmic-facing. The segment covering 9 to 19 (GSQASAVGASS) has biased composition (low complexity). A helical transmembrane segment spans residues 37-57 (ALLLAVALDVAGMAALLTGVF). The Extracellular segment spans residues 58–69 (AQLQVRGRDFGD). A helical transmembrane segment spans residues 70–90 (LLIYSGALLVFLSLLGWILWY). The Cytoplasmic segment spans residues 91-176 (TGNIEISRQE…GSVAAGTGSE (86 aa)). Residues 124–135 (SAPATASPRTTA) are compositionally biased toward low complexity. Residues 124–156 (SAPATASPRTTAGLRSARRANRAPQPSSSGSRR) are disordered. Serine 175 bears the Phosphoserine mark.

The protein localises to the membrane. The polypeptide is Transmembrane protein 238 (Tmem238) (Mus musculus (Mouse)).